Consider the following 1227-residue polypeptide: RNA-binding protein 20 (1227 aa).

2 disordered regions span residues 1-58 (MVLA…QAGL) and 289-374 (GSHV…SKQG). The span at 27-42 (PGARASPAPSGPRGMQ) shows a compositional bias: low complexity. Residues 43-56 (QPPPPPQPPPPPQA) are compositionally biased toward pro residues. Residues 313–331 (QGTNSQWESPHGFSGQSKP) are compositionally biased toward polar residues. A U1-type zinc finger spans residues 409-443 (HLPHICSICDKKVFDLKDWELHVKGKLHAQKCLVF). At Ser-498 the chain carries Phosphoserine. The region spanning 518-593 (RVVHICNLPE…EKLLIRMSKR (76 aa)) is the RRM domain. Basic and acidic residues predominate over residues 624–634 (EADRYGPERPR). Disordered regions lie at residues 624–906 (EADR…TNME) and 977–1089 (SLKS…ASPP). The interval 628-655 (YGPERPRSRSPVSRSLSPRSHTPSFTSC) is RS. Phosphoserine occurs at positions 635, 637, 640, 642, 660, and 679. The span at 636–660 (RSPVSRSLSPRSHTPSFTSCSSSHS) shows a compositional bias: low complexity. Basic and acidic residues-rich tracts occupy residues 674 to 709 (DSWEHSPYARREEERDPAPWRDNGDDKRDRMDPWAH) and 716 to 738 (RQLDKAELDERPEGGRPHREKYP). The segment covering 741–752 (GSPNLPHSVSSY) has biased composition (polar residues). Ser-742 bears the Phosphoserine mark. Basic and acidic residues-rich tracts occupy residues 753-772 (KSREDGYYRKEPKAKSDKYL), 784-807 (RKDEARLRESRHPHPDDSGKEDGL), and 816-856 (EGAK…KEEQ). Ser-801 is modified (phosphoserine). Phosphoserine is present on residues Ser-865, Ser-876, Ser-891, Ser-893, Ser-977, Ser-980, and Ser-1013. Residues 868–888 (RQEKEAEFSDPENTRTKKEQD) are compositionally biased toward basic and acidic residues. The span at 1024–1036 (CYEKEAKGVESSD) shows a compositional bias: basic and acidic residues. Phosphoserine occurs at positions 1048, 1060, 1080, 1115, and 1120. The segment at 1161–1192 (FYCKLCGLFYTSEETAKMSHCRSAVHYRNLQK) adopts a Matrin-type zinc-finger fold. A compositionally biased stretch (basic and acidic residues) spans 1201 to 1215 (GLKETEGADSPRPED). The tract at residues 1201-1227 (GLKETEGADSPRPEDSGIVPRFERKKL) is disordered. The residue at position 1210 (Ser-1210) is a Phosphoserine.

Associates with components of the U1 and U2 U1 small nuclear ribonucleoprotein complexes. In terms of processing, phosphorylation regulates the subcellular localization. Phosphorylation of Ser-635 and Ser-637 in the RS (arginine/serine-rich) region promotes nuclear localization of the protein. In contrast, phosphorylation of the C-terminal disordered region promotes localization to cytoplasmic ribonucleoprotein granules. Mainly expressed in the heart. Also expressed in skeletal muscle tissues, ovary, small intestine and colon.

The protein resides in the nucleus. It is found in the cytoplasm. Its subcellular location is the cytoplasmic ribonucleoprotein granule. In terms of biological role, RNA-binding protein that acts as a regulator of mRNA splicing of a subset of genes encoding key structural proteins involved in cardiac development, such as TTN (Titin), CACNA1C, CAMK2D or PDLIM5/ENH. Acts as a repressor of mRNA splicing: specifically binds the 5'UCUU-3' motif that is predominantly found within intronic sequences of pre-mRNAs, leading to the exclusion of specific exons in target transcripts. RBM20-mediated exon skipping is hormone-dependent and is essential for TTN isoform transition in both cardiac and skeletal muscles. RBM20-mediated exon skipping of TTN provides substrates for the formation of circular RNA (circRNAs) from the TTN transcripts. Together with RBM24, promotes the expression of short isoforms of PDLIM5/ENH in cardiomyocytes. The protein is RNA-binding protein 20 of Homo sapiens (Human).